A 90-amino-acid chain; its full sequence is Putative regulatory protein cce_4590 (90 aa).

This sequence belongs to the RemA family.

In Crocosphaera subtropica (strain ATCC 51142 / BH68) (Cyanothece sp. (strain ATCC 51142)), this protein is Putative regulatory protein cce_4590.